The chain runs to 153 residues: H/ACA ribonucleoprotein complex subunit 2 (153 aa).

Lys-3 participates in a covalent cross-link: Glycyl lysine isopeptide (Lys-Gly) (interchain with G-Cter in SUMO2). Residue Lys-5 forms a Glycyl lysine isopeptide (Lys-Gly) (interchain with G-Cter in SUMO); alternate linkage. A Glycyl lysine isopeptide (Lys-Gly) (interchain with G-Cter in SUMO1); alternate cross-link involves residue Lys-5. Lys-5 participates in a covalent cross-link: Glycyl lysine isopeptide (Lys-Gly) (interchain with G-Cter in SUMO2); alternate. At Ser-19 the chain carries Phosphoserine.

The protein belongs to the eukaryotic ribosomal protein eL8 family. Part of the H/ACA small nucleolar ribonucleoprotein (H/ACA snoRNP) complex, which contains NHP2/NOLA2, GAR1/NOLA1, NOP10/NOLA3, and DKC1/NOLA4, which is presumed to be the catalytic subunit. The complex contains a stable core formed by binding of one or two NOP10-DKC1 heterodimers to NHP2; GAR1 subsequently binds to this core via DKC1. The complex binds a box H/ACA small nucleolar RNA (snoRNA), which may target the specific site of modification within the RNA substrate. During assembly, the complex contains NAF1 instead of GAR1/NOLA1. The complex also interacts with TERC, which contains a 3'-terminal domain related to the box H/ACA snoRNAs. Specific interactions with snoRNAs or TERC are mediated by GAR1 and NHP2. Associates with NOLC1/NOPP140. H/ACA snoRNPs interact with the SMN complex, consisting of SMN1 or SMN2, GEMIN2/SIP1, DDX20/GEMIN3, and GEMIN4. This is mediated by interaction between GAR1 and SMN1 or SMN2. The SMN complex may be required for correct assembly of the H/ACA snoRNP complex. Component of the telomerase holoenzyme complex composed of one molecule of TERT, one molecule of WRAP53/TCAB1, two molecules of H/ACA ribonucleoprotein complex subunits DKC1, NOP10, NHP2 and GAR1, and a telomerase RNA template component (TERC). The telomerase holoenzyme complex is associated with TEP1, SMG6/EST1A and POT1.

The protein resides in the nucleus. Its subcellular location is the nucleolus. It is found in the cajal body. In terms of biological role, required for ribosome biogenesis and telomere maintenance. Part of the H/ACA small nucleolar ribonucleoprotein (H/ACA snoRNP) complex, which catalyzes pseudouridylation of rRNA. This involves the isomerization of uridine such that the ribose is subsequently attached to C5, instead of the normal N1. Each rRNA can contain up to 100 pseudouridine ('psi') residues, which may serve to stabilize the conformation of rRNAs. May also be required for correct processing or intranuclear trafficking of TERC, the RNA component of the telomerase reverse transcriptase (TERT) holoenzyme. The polypeptide is H/ACA ribonucleoprotein complex subunit 2 (Nhp2) (Mus musculus (Mouse)).